The sequence spans 531 residues: Polyamine transporter PUT1 (531 aa).

The tract at residues 1 to 76 is disordered; the sequence is MADTGGRPEV…LPDGDAGGPM (76 aa). Residues 17 to 33 show a composition bias toward low complexity; sequence SPGHPAASTTAAAAADL. Residues 34–44 show a composition bias toward basic and acidic residues; it reads GHADTGQEKPT. Transmembrane regions (helical) follow at residues 83–103, 113–133, 147–167, 193–213, 224–244, 262–284, 296–316, 341–361, 391–411, 414–434, 453–473, and 476–496; these read VSMIPLIFLIFYEVSGGPFGI, LLAIIGFLVLPVIWSIPEALI, YVVWVASALGPYWGFQQGWMK, LGGGAPRAFAVVGLTAVLTLL, VAICLGVFSLLPFFVMGLIAL, WNLYLNTLFWNLNYWDSISTLAG, ALFYAVIFVVVAYLYPLLAGT, AWLMWWVQSAAALSNMGMFVA, TPLAGILFSASGVLLLSMMSF, IVAAENFLYCFGMLLEFVAFI, TAGCVAMLVPPTALIAVVLAL, and LKVAVVSLGAVAMGLVLQPAL.

It belongs to the amino acid-polyamine-organocation (APC) superfamily. Polyamine:cation symporter (PHS) (TC 2.A.3.12) family. As to expression, expressed in seedling roots, leaves, stems, flowers and siliques.

It localises to the cell membrane. Functionally, cell membrane polyamine/proton symporter involved in the polyamine uptake in cells. Possesses high affinity for spermidine and lower affinity for spermine and putrescine. Transports paraquat, a polyamine analog, and thus confers sensitivity to this chemical which is used as a herbicide. The protein is Polyamine transporter PUT1 (PUT1) of Oryza sativa subsp. japonica (Rice).